The primary structure comprises 464 residues: UNC93-like protein 3 (464 aa).

The next 11 membrane-spanning stretches (helical) occupy residues 31–51, 62–82, 84–104, 110–130, 160–180, 192–212, 251–271, 275–295, 313–333, 341–361, and 392–412; these read VHILSISFLLIFLAYGAAQNL, ISLGILYVSFMFCSMVASLVV, LMGSKNALVLGTTGYWLFVAA, WFTMVPASLYLGFAASIIWVG, EFWAMFACHQLFGNLITLALL, TLLMLVFLFSMTLGTILMFFI, LLIVPLLAYSGLQQAFVWAEF, IVTPAIGVSGVGGAMAVYGAL, ITFIVSGGAVAQASVFLWLLL, VLGTAYPLIMAAILGIGDGIL, and IAIVFFLSPYISLQAMLIVML.

It belongs to the unc-93 family.

It is found in the membrane. This Arabidopsis thaliana (Mouse-ear cress) protein is UNC93-like protein 3.